The chain runs to 154 residues: Endoribonuclease YbeY (154 aa).

His113, His117, and His123 together coordinate Zn(2+).

The protein belongs to the endoribonuclease YbeY family. Zn(2+) is required as a cofactor.

The protein localises to the cytoplasm. Single strand-specific metallo-endoribonuclease involved in late-stage 70S ribosome quality control and in maturation of the 3' terminus of the 16S rRNA. This is Endoribonuclease YbeY from Vibrio vulnificus (strain YJ016).